A 514-amino-acid chain; its full sequence is 2,3-bisphosphoglycerate-independent phosphoglycerate mutase (514 aa).

Residues aspartate 14 and serine 64 each coordinate Mn(2+). Serine 64 (phosphoserine intermediate) is an active-site residue. Residues histidine 125, 155-156 (RD), arginine 187, arginine 193, 263-266 (RADR), and lysine 336 contribute to the substrate site. 5 residues coordinate Mn(2+): aspartate 403, histidine 407, aspartate 444, histidine 445, and histidine 463.

It belongs to the BPG-independent phosphoglycerate mutase family. In terms of assembly, monomer. It depends on Mn(2+) as a cofactor.

It catalyses the reaction (2R)-2-phosphoglycerate = (2R)-3-phosphoglycerate. It functions in the pathway carbohydrate degradation; glycolysis; pyruvate from D-glyceraldehyde 3-phosphate: step 3/5. In terms of biological role, catalyzes the interconversion of 2-phosphoglycerate and 3-phosphoglycerate. This Shewanella denitrificans (strain OS217 / ATCC BAA-1090 / DSM 15013) protein is 2,3-bisphosphoglycerate-independent phosphoglycerate mutase.